The following is a 197-amino-acid chain: Protein GrpE (197 aa).

A disordered region spans residues 1–41 (MSSKEQKTPEGQAPEEIITEQHEEVEAVEPDASAEQVDPRD).

Belongs to the GrpE family. As to quaternary structure, homodimer.

The protein resides in the cytoplasm. Participates actively in the response to hyperosmotic and heat shock by preventing the aggregation of stress-denatured proteins, in association with DnaK and GrpE. It is the nucleotide exchange factor for DnaK and may function as a thermosensor. Unfolded proteins bind initially to DnaJ; upon interaction with the DnaJ-bound protein, DnaK hydrolyzes its bound ATP, resulting in the formation of a stable complex. GrpE releases ADP from DnaK; ATP binding to DnaK triggers the release of the substrate protein, thus completing the reaction cycle. Several rounds of ATP-dependent interactions between DnaJ, DnaK and GrpE are required for fully efficient folding. This Enterobacter sp. (strain 638) protein is Protein GrpE.